A 637-amino-acid polypeptide reads, in one-letter code: Transcriptional activator of proteases prtT (637 aa).

The segment at residues 47 to 76 is a DNA-binding region (zn(2)-C6 fungal-type); that stretch reads CHTCRKLKTRCDVDPRGHSCRRCLSLRLDC. The segment covering 127–145 has biased composition (polar residues); that stretch reads PSMPCSPTFQTRNHSIDGT. The interval 127–153 is disordered; it reads PSMPCSPTFQTRNHSIDGTSSSDSMSS.

Belongs to the prtT family.

The protein resides in the nucleus. In terms of biological role, transcription factor required for protein utilization and degradation. Regulates transcription of major secreted proteases. The sequence is that of Transcriptional activator of proteases prtT (prtT) from Penicillium rubens (strain ATCC 28089 / DSM 1075 / NRRL 1951 / Wisconsin 54-1255) (Penicillium chrysogenum).